A 330-amino-acid polypeptide reads, in one-letter code: uncharacterized protein (330 aa).

The region spanning 4-242 (LSIQNLVVEY…AGEVLFEQST (239 aa)) is the ABC transporter domain. Residue 40–47 (GPSGCGKT) participates in ATP binding. 210–330 (DRVVELTPDF…LIEHRALAND (121 aa)) contacts a nucleoside 3',5'-cyclic phosphate.

Belongs to the ABC transporter superfamily. In terms of assembly, the complex is composed of two ATP-binding proteins (MT0079), two transmembrane proteins (MT0078) and a solute-binding protein.

In terms of biological role, probably part of an ABC transporter complex. Probably responsible for energy coupling to the transport system. This is an uncharacterized protein from Mycobacterium tuberculosis (strain CDC 1551 / Oshkosh).